The following is a 245-amino-acid chain: Adapter protein MecA (245 aa).

The protein belongs to the MecA family. Homodimer.

Enables the recognition and targeting of unfolded and aggregated proteins to the ClpC protease or to other proteins involved in proteolysis. In Streptococcus pneumoniae serotype 4 (strain ATCC BAA-334 / TIGR4), this protein is Adapter protein MecA.